We begin with the raw amino-acid sequence, 509 residues long: MSSHIQIFDTTLRDGEQTPGVNFTFDERLRIALQLEKWGVDVIEAGFPASSTGSFKSVQAIAQTLTTTAVCGLARCKKSDIDAVYEATKDAAKPVVHVFIATSPIHLEHKLKMSQEDVLASIKEHVTYAKQLFDVVQFSPEDATRTELPFLVKCVQTAVDAGATVINIPDTVGYSYHDEYAHIFKTLTESVTSSNEIIYSAHCHDDLGMAVSNSLAAIEGGARRIEGTVNGIGERAGNAALEEVALALYVRNDHYGAQTALNLEETKKTSDLISRYAGIRVPRNKAIVGQNAFSHESGIHQDGVLKHRETYEIMTPQLVGVSTTELPLGKLSGKHAFSEKLKALGYDIDKEAQIDLFKQFKAIADKKKSVSDRDIHAIIQGSEHEHQALYKLETLQLQYVSSGLQSAVVVVKDKEGHIYQDSSIGTGSIVAIYNAVDRIFQKETELIDYRINSVTEGTDAQAEVHVNLLIEGKTVNGFGIDHDILQASCKAYVEAHAKFAAENVEKVGN.

Residues 5 to 267 (IQIFDTTLRD…QTALNLEETK (263 aa)) form the Pyruvate carboxyltransferase domain. Mn(2+) contacts are provided by aspartate 14, histidine 202, histidine 204, and asparagine 238. The interval 391–509 (KLETLQLQYV…AAENVEKVGN (119 aa)) is regulatory domain.

Belongs to the alpha-IPM synthase/homocitrate synthase family. LeuA type 1 subfamily. In terms of assembly, homodimer. Mn(2+) is required as a cofactor.

The protein localises to the cytoplasm. It carries out the reaction 3-methyl-2-oxobutanoate + acetyl-CoA + H2O = (2S)-2-isopropylmalate + CoA + H(+). The protein operates within amino-acid biosynthesis; L-leucine biosynthesis; L-leucine from 3-methyl-2-oxobutanoate: step 1/4. Its function is as follows. Catalyzes the condensation of the acetyl group of acetyl-CoA with 3-methyl-2-oxobutanoate (2-ketoisovalerate) to form 3-carboxy-3-hydroxy-4-methylpentanoate (2-isopropylmalate). The chain is 2-isopropylmalate synthase from Staphylococcus aureus (strain USA300).